Consider the following 529-residue polypeptide: Probable alpha-galactosidase A (529 aa).

An N-terminal signal peptide occupies residues 1 to 19 (MKALFAAITMAHALLQTQA). Residues Cys-42 and Cys-74 are joined by a disulfide bond. Asn-45, Asn-83, Asn-89, and Asn-119 each carry an N-linked (GlcNAc...) asparagine glycan. A disulfide bridge links Cys-122 with Cys-152. Asp-150 functions as the Nucleophile in the catalytic mechanism. Asn-199 is a glycosylation site (N-linked (GlcNAc...) asparagine). The active-site Proton donor is the Asp-208. N-linked (GlcNAc...) asparagine glycosylation is present at Asn-351. Residues 408 to 528 (RVDAVSTGIV…GLPSGVRVSG (121 aa)) form the Ricin B-type lectin domain. Cystine bridges form between Cys-425-Cys-438 and Cys-462-Cys-475.

It belongs to the glycosyl hydrolase 27 family.

The protein resides in the secreted. The catalysed reaction is Hydrolysis of terminal, non-reducing alpha-D-galactose residues in alpha-D-galactosides, including galactose oligosaccharides, galactomannans and galactolipids.. Its function is as follows. Hydrolyzes a variety of simple alpha-D-galactoside as well as more complex molecules such as oligosaccharides and polysaccharides. In Aspergillus terreus (strain NIH 2624 / FGSC A1156), this protein is Probable alpha-galactosidase A (aglA).